The following is a 420-amino-acid chain: Serine hydroxymethyltransferase (420 aa).

Residues Leu-121 and 125 to 127 (GHL) contribute to the (6S)-5,6,7,8-tetrahydrofolate site. Lys-230 is subject to N6-(pyridoxal phosphate)lysine. Residues Glu-246 and 354–356 (SPF) each bind (6S)-5,6,7,8-tetrahydrofolate.

The protein belongs to the SHMT family. Homodimer. The cofactor is pyridoxal 5'-phosphate.

It localises to the cytoplasm. It catalyses the reaction (6R)-5,10-methylene-5,6,7,8-tetrahydrofolate + glycine + H2O = (6S)-5,6,7,8-tetrahydrofolate + L-serine. It functions in the pathway one-carbon metabolism; tetrahydrofolate interconversion. Its pathway is amino-acid biosynthesis; glycine biosynthesis; glycine from L-serine: step 1/1. Functionally, catalyzes the reversible interconversion of serine and glycine with tetrahydrofolate (THF) serving as the one-carbon carrier. This reaction serves as the major source of one-carbon groups required for the biosynthesis of purines, thymidylate, methionine, and other important biomolecules. Also exhibits THF-independent aldolase activity toward beta-hydroxyamino acids, producing glycine and aldehydes, via a retro-aldol mechanism. The sequence is that of Serine hydroxymethyltransferase from Rickettsia massiliae (strain Mtu5).